We begin with the raw amino-acid sequence, 331 residues long: 6-phosphogluconolactonase (331 aa).

It belongs to the cycloisomerase 2 family.

It carries out the reaction 6-phospho-D-glucono-1,5-lactone + H2O = 6-phospho-D-gluconate + H(+). The protein operates within carbohydrate degradation; pentose phosphate pathway; D-ribulose 5-phosphate from D-glucose 6-phosphate (oxidative stage): step 2/3. In terms of biological role, catalyzes the hydrolysis of 6-phosphogluconolactone to 6-phosphogluconate. The sequence is that of 6-phosphogluconolactonase from Salmonella choleraesuis (strain SC-B67).